Reading from the N-terminus, the 374-residue chain is MKPKVRFFDLQPYGDKFVVRDPVGISQPFIATPELLFLLSLMDGTRDITDLQAEFFKKTGHLIPKEEINQVINFLDENYLLYNERFLNKLKEEREKILKKGYREPSHAGQAYPENPQELKNFIEETVNKNSEKFKARGILVPHMDLRVASGVYGSVYSAIKENEYDTVVLLGVSHYFHETPFSVLPLDLRTPLGDLKVDIERVEELQKMFDYDLSHDVLAYKNEHSIEFQTIFLKYLFPEVKVIPAIVSYGDTKSLKEIAHKITKVLEDSQNPLIISSVDFSHVGRKFGDPHSYDPSPRDREYINLLAELKNEEAFNLLQSDNNRTRIDGQFTNFVFLEILKNLGVKEGKLLDYDVYHEAPTDSKVSYAGMVFY.

This sequence belongs to the MEMO1 family.

The polypeptide is MEMO1 family protein aq_1336 (Aquifex aeolicus (strain VF5)).